The primary structure comprises 626 residues: Phosphomethylpyrimidine synthase (626 aa).

Residues Asn-237, Met-266, Tyr-295, His-331, 351–353 (SRG), 392–395 (DGLR), and Glu-431 each bind substrate. His-435 is a Zn(2+) binding site. Tyr-458 serves as a coordination point for substrate. His-499 is a binding site for Zn(2+). The [4Fe-4S] cluster site is built by Cys-579, Cys-582, and Cys-587.

Belongs to the ThiC family. As to quaternary structure, homodimer. [4Fe-4S] cluster is required as a cofactor.

The catalysed reaction is 5-amino-1-(5-phospho-beta-D-ribosyl)imidazole + S-adenosyl-L-methionine = 4-amino-2-methyl-5-(phosphooxymethyl)pyrimidine + CO + 5'-deoxyadenosine + formate + L-methionine + 3 H(+). It functions in the pathway cofactor biosynthesis; thiamine diphosphate biosynthesis. In terms of biological role, catalyzes the synthesis of the hydroxymethylpyrimidine phosphate (HMP-P) moiety of thiamine from aminoimidazole ribotide (AIR) in a radical S-adenosyl-L-methionine (SAM)-dependent reaction. The polypeptide is Phosphomethylpyrimidine synthase (Cupriavidus pinatubonensis (strain JMP 134 / LMG 1197) (Cupriavidus necator (strain JMP 134))).